A 159-amino-acid polypeptide reads, in one-letter code: Disease resistance response protein Pi176 (159 aa).

The protein belongs to the BetVI family.

The protein is Disease resistance response protein Pi176 of Pisum sativum (Garden pea).